The following is a 538-amino-acid chain: Nucleobase-ascorbate transporter 7 (538 aa).

A compositionally biased stretch (gly residues) spans 1 to 11; the sequence is MAGGGGGGGGV. The interval 1-20 is disordered; that stretch reads MAGGGGGGGGVAPPLKHDGL. The next 12 membrane-spanning stretches (helical) occupy residues 45-65, 81-101, 103-123, 143-163, 166-186, 191-211, 229-249, 295-315, 372-394, 398-420, 432-452, and 471-491; these read AILL…LIPT, MVQT…FFGT, LPAV…IILA, IQGA…SGLW, VVRL…GFGL, FPLL…LLLF, FAVI…TVGG, FAMM…YIVV, VVQI…AIFA, APVV…LSLL, FILG…NQYT, and INVP…FLDV.

Belongs to the nucleobase:cation symporter-2 (NCS2) (TC 2.A.40) family. Expressed exclusively in ovules.

It localises to the cell membrane. This chain is Nucleobase-ascorbate transporter 7 (NAT7), found in Arabidopsis thaliana (Mouse-ear cress).